The primary structure comprises 276 residues: NH(3)-dependent NAD(+) synthetase (276 aa).

43–50 contributes to the ATP binding site; that stretch reads GISGGVDS. D49 is a binding site for Mg(2+). Position 146 (R146) interacts with deamido-NAD(+). T166 contributes to the ATP binding site. Position 171 (E171) interacts with Mg(2+). Residues K179 and D186 each contribute to the deamido-NAD(+) site. Residues K195 and T217 each coordinate ATP. 266 to 267 lines the deamido-NAD(+) pocket; sequence HK.

This sequence belongs to the NAD synthetase family. In terms of assembly, homodimer.

It catalyses the reaction deamido-NAD(+) + NH4(+) + ATP = AMP + diphosphate + NAD(+) + H(+). It functions in the pathway cofactor biosynthesis; NAD(+) biosynthesis; NAD(+) from deamido-NAD(+) (ammonia route): step 1/1. Catalyzes the ATP-dependent amidation of deamido-NAD to form NAD. Uses ammonia as a nitrogen source. This chain is NH(3)-dependent NAD(+) synthetase, found in Shewanella amazonensis (strain ATCC BAA-1098 / SB2B).